Consider the following 287-residue polypeptide: AA14 family lytic polysaccharide monooxygenase A (287 aa).

The first 18 residues, 1-18, serve as a signal peptide directing secretion; sequence MLRILTLSILATSKLASA. N-linked (GlcNAc...) asparagine glycosylation is found at asparagine 33, asparagine 83, and asparagine 137. 3 disulfides stabilise this stretch: cysteine 188/cysteine 193, cysteine 195/cysteine 216, and cysteine 236/cysteine 243. An N-linked (GlcNAc...) asparagine glycan is attached at asparagine 238.

Belongs to the polysaccharide monooxygenase AA14 family. The cofactor is Cu(2+).

Its subcellular location is the secreted. Functionally, lytic polysaccharide monooxygenase (LPMO) that has a broad substrate specificity with strong oxidative activity on pure amorphous cellulose and xyloglucan and plays as a bifunctional enzyme to decompose some specific network structures formed between cellulose and hemicellulose in the plant cell walls. Catalysis by LPMOs requires the reduction of the active-site copper from Cu(II) to Cu(I) by a reducing agent and H(2)O(2) or O(2) as a cosubstrate. Simultaneously oxidizes cellulose, xylan and xyloglucan in natural hemi/cellulosic substrate such as fibrillated eucalyptus pulp, and releases native and oxidized cello-oligosaccharides, xylo-oligosaccharides and xyloglucan oligosaccharides from this substrate. The cellulolytic/hemicellulolytic activity becomes weaker as the contents of xylan increase in the alkaline-extracted hemi/cellulosic substrates. The protein is AA14 family lytic polysaccharide monooxygenase A of Talaromyces rugulosus (Penicillium rugulosum).